Reading from the N-terminus, the 127-residue chain is MAYVKERIYESMFIIAPNVPEEEREKLVERVKGIIEERVKGKIDKVERMGMRKFAYEIKKFSEGDYTVIYFRCDGQHLQELENFYRITPEIIRWQTFRRFDLEKKERKAQSEKKEAEVSEGEGGTEA.

Over residues 106–117 the composition is skewed to basic and acidic residues; sequence ERKAQSEKKEAE. The interval 106 to 127 is disordered; the sequence is ERKAQSEKKEAEVSEGEGGTEA. A compositionally biased stretch (acidic residues) spans 118–127; sequence VSEGEGGTEA.

This sequence belongs to the bacterial ribosomal protein bS6 family.

Its function is as follows. Binds together with bS18 to 16S ribosomal RNA. In Thermotoga neapolitana (strain ATCC 49049 / DSM 4359 / NBRC 107923 / NS-E), this protein is Small ribosomal subunit protein bS6.